Consider the following 686-residue polypeptide: Solute carrier family 22 member 23 (686 aa).

Disordered stretches follow at residues M1–P62 and G169–D193. N24 is a glycosylation site (N-linked (GlcNAc...) asparagine). 2 helical membrane passes run F234–V254 and P258–V278. A glycan (N-linked (GlcNAc...) asparagine) is linked at N279. Helical transmembrane passes span F288–L308, F315–L335, V344–P364, A467–V487, G494–L514, I538–F558, C569–I589, and F598–L618.

The protein belongs to the major facilitator (TC 2.A.1) superfamily. Organic cation transporter (TC 2.A.1.19) family.

The protein localises to the membrane. The protein is Solute carrier family 22 member 23 (SLC22A23) of Homo sapiens (Human).